A 206-amino-acid polypeptide reads, in one-letter code: Acidic proline-rich protein PRP33 (206 aa).

An N-terminal signal peptide occupies residues 1–13; the sequence is MLVVLLTAALLVL. Positions 15 to 206 are disordered; sequence SAHGSDEEVI…EQPSYLWFSS (192 aa). A compositionally biased stretch (acidic residues) spans 55–71; sequence ENGDGDDSDDGDDDGSG. 6 consecutive repeat copies span residues 80–97, 98–115, 116–133, 134–152, 153–170, and 171–189. The 6 X 18 AA approximate tandem repeats stretch occupies residues 80-189; it reads PPPHGGNHQR…RPPQPRKPQD (110 aa). Residues 103-112 show a composition bias toward low complexity; sequence GPQTSSQPGN. Positions 113 to 174 are enriched in pro residues; it reads PQGPPPQGGP…PGNPQGPPPQ (62 aa).

The protein resides in the secreted. May protect teeth by binding to tannins. The protein is Acidic proline-rich protein PRP33 (Prpg1) of Rattus norvegicus (Rat).